The following is a 182-amino-acid chain: NADH-quinone oxidoreductase subunit I (182 aa).

4Fe-4S ferredoxin-type domains are found at residues 52–82 (LTRD…LQKA) and 92–121 (DFFR…LTPD). Residues Cys62, Cys65, Cys68, Cys72, Cys101, Cys104, Cys107, and Cys111 each contribute to the [4Fe-4S] cluster site.

Belongs to the complex I 23 kDa subunit family. As to quaternary structure, NDH-1 is composed of 13 different subunits. Subunits NuoA, H, J, K, L, M, N constitute the membrane sector of the complex. The cofactor is [4Fe-4S] cluster.

The protein resides in the cell inner membrane. The enzyme catalyses a quinone + NADH + 5 H(+)(in) = a quinol + NAD(+) + 4 H(+)(out). Its function is as follows. NDH-1 shuttles electrons from NADH, via FMN and iron-sulfur (Fe-S) centers, to quinones in the respiratory chain. The immediate electron acceptor for the enzyme in this species is believed to be ubiquinone. Couples the redox reaction to proton translocation (for every two electrons transferred, four hydrogen ions are translocated across the cytoplasmic membrane), and thus conserves the redox energy in a proton gradient. This Pseudomonas fluorescens (strain ATCC BAA-477 / NRRL B-23932 / Pf-5) protein is NADH-quinone oxidoreductase subunit I.